A 284-amino-acid chain; its full sequence is Ribosomal RNA small subunit methyltransferase A (284 aa).

S-adenosyl-L-methionine is bound by residues N27, L29, G54, E75, D100, and N125.

This sequence belongs to the class I-like SAM-binding methyltransferase superfamily. rRNA adenine N(6)-methyltransferase family. RsmA subfamily.

The protein localises to the cytoplasm. The enzyme catalyses adenosine(1518)/adenosine(1519) in 16S rRNA + 4 S-adenosyl-L-methionine = N(6)-dimethyladenosine(1518)/N(6)-dimethyladenosine(1519) in 16S rRNA + 4 S-adenosyl-L-homocysteine + 4 H(+). Specifically dimethylates two adjacent adenosines (A1518 and A1519) in the loop of a conserved hairpin near the 3'-end of 16S rRNA in the 30S particle. May play a critical role in biogenesis of 30S subunits. The polypeptide is Ribosomal RNA small subunit methyltransferase A (Protochlamydia amoebophila (strain UWE25)).